A 165-amino-acid polypeptide reads, in one-letter code: Small ribosomal subunit protein uS3m (165 aa).

A mitochondrion-targeting transit peptide spans 1–30 (MNFLKKLLPQVATEVQQLSRSGFHTSSVCC).

The protein belongs to the universal ribosomal protein uS3 family. As to quaternary structure, component of the mitochondrial ribosome small subunit (28S) which comprises a 12S rRNA and about 30 distinct proteins.

The protein resides in the mitochondrion. The protein is Small ribosomal subunit protein uS3m (mRpS24) of Drosophila melanogaster (Fruit fly).